Reading from the N-terminus, the 118-residue chain is Fluoride-specific ion channel FluC 1 (118 aa).

2 helical membrane-spanning segments follow: residues 5–25 (FLLV…ISVL) and 47–67 (FLLG…FLGT). Residues glycine 71 and threonine 74 each coordinate Na(+). Residues 98–118 (YLGFTYVFGLIAAFLGMMLGV) traverse the membrane as a helical segment.

Belongs to the fluoride channel Fluc/FEX (TC 1.A.43) family.

The protein resides in the cell membrane. The enzyme catalyses fluoride(in) = fluoride(out). Its activity is regulated as follows. Na(+) is not transported, but it plays an essential structural role and its presence is essential for fluoride channel function. Its function is as follows. Fluoride-specific ion channel. Important for reducing fluoride concentration in the cell, thus reducing its toxicity. The polypeptide is Fluoride-specific ion channel FluC 1 (Listeria monocytogenes serovar 1/2a (strain ATCC BAA-679 / EGD-e)).